The sequence spans 113 residues: Small ribosomal subunit protein bS6 (113 aa).

The protein belongs to the bacterial ribosomal protein bS6 family.

Functionally, binds together with bS18 to 16S ribosomal RNA. The protein is Small ribosomal subunit protein bS6 of Flavobacterium psychrophilum (strain ATCC 49511 / DSM 21280 / CIP 103535 / JIP02/86).